A 252-amino-acid chain; its full sequence is Petrobactin import ATP-binding protein YclP (252 aa).

The ABC transporter domain occupies 2–236; that stretch reads VEVRNVSKQY…SVLEEIYDMT (235 aa). 34–41 contributes to the ATP binding site; the sequence is GPNGAGKS.

Belongs to the ABC transporter superfamily. The complex is composed of two ATP-binding proteins (YclP), two transmembrane proteins (YclN and YclO) and a solute-binding protein (YclQ).

The protein localises to the cell membrane. The catalysed reaction is a Fe(III)-siderophore(out) + ATP + H2O = a Fe(III)-siderophore(in) + ADP + phosphate + H(+). Functionally, part of the ABC transporter complex YclNOPQ involved in uptake of ferric-petrobactin. Petrobactin is a photoreactive 3,4-catecholate siderophore produced by many members of the B.cereus group, including B.anthracis. Probably responsible for energy coupling to the transport system. The sequence is that of Petrobactin import ATP-binding protein YclP (yclP) from Bacillus subtilis (strain 168).